The primary structure comprises 514 residues: Putative GTP-binding protein 6 (514 aa).

The segment at 48–71 is disordered; the sequence is WAGGGPVRGGGEEDPREDEEEEED. Residues 59 to 71 show a composition bias toward acidic residues; the sequence is EEDPREDEEEEED. The region spanning 285–449 is the Hflx-type G domain; sequence PVVSVVGYTN…ALEASVLRAT (165 aa). Residues T298 and T319 each contribute to the Mg(2+) site.

It belongs to the TRAFAC class OBG-HflX-like GTPase superfamily. HflX GTPase family. Requires Mg(2+) as cofactor.

This is Putative GTP-binding protein 6 (Gtpbp6) from Mus musculus (Mouse).